Here is a 211-residue protein sequence, read N- to C-terminus: Endonuclease V (211 aa).

Positions 31 and 95 each coordinate Mg(2+). The interval 182–211 (IYEVKNTPSPNRSRKKRGNRGKDNNNSQGN) is disordered.

This sequence belongs to the endonuclease V family. Mg(2+) serves as cofactor.

The protein localises to the cytoplasm. It catalyses the reaction Endonucleolytic cleavage at apurinic or apyrimidinic sites to products with a 5'-phosphate.. In terms of biological role, DNA repair enzyme involved in the repair of deaminated bases. Selectively cleaves double-stranded DNA at the second phosphodiester bond 3' to a deoxyinosine leaving behind the intact lesion on the nicked DNA. The chain is Endonuclease V from Pyrococcus horikoshii (strain ATCC 700860 / DSM 12428 / JCM 9974 / NBRC 100139 / OT-3).